The sequence spans 321 residues: Protein ABIL3 (321 aa).

Disordered regions lie at residues 179-273 (TIRE…RSAS) and 279-298 (EKEA…SKRL). Composition is skewed to low complexity over residues 204 to 215 (SATFSFSSIATA) and 240 to 255 (IRPS…SKSR). Residues 279 to 288 (EKEAQKEPEH) are compositionally biased toward basic and acidic residues.

It belongs to the ABI family. As to quaternary structure, binds SCAR.

It localises to the cytoplasm. It is found in the cytoskeleton. Functionally, involved in regulation of actin and microtubule organization. Part of a WAVE complex that activates the Arp2/3 complex. The chain is Protein ABIL3 (ABIL3) from Arabidopsis thaliana (Mouse-ear cress).